The following is a 188-amino-acid chain: Phosphatidylinositol N-acetylglucosaminyltransferase subunit H (188 aa).

It belongs to the PIGH family. In terms of assembly, component of the glycosylphosphatidylinositol-N-acetylglucosaminyltransferase (GPI-GnT) complex composed at least by PIGA, PIGC, PIGH, PIGP, PIGQ, PIGY and DPM2. Interacts with PIGQ.

The protein resides in the cytoplasm. The protein operates within glycolipid biosynthesis; glycosylphosphatidylinositol-anchor biosynthesis. Functionally, part of the glycosylphosphatidylinositol-N-acetylglucosaminyltransferase (GPI-GnT) complex that catalyzes the transfer of N-acetylglucosamine from UDP-N-acetylglucosamine to phosphatidylinositol and participates in the first step of GPI biosynthesis. The sequence is that of Phosphatidylinositol N-acetylglucosaminyltransferase subunit H from Mus musculus (Mouse).